We begin with the raw amino-acid sequence, 41 residues long: Large ribosomal subunit protein bL36 (41 aa).

Belongs to the bacterial ribosomal protein bL36 family.

The protein is Large ribosomal subunit protein bL36 of Sinorhizobium medicae (strain WSM419) (Ensifer medicae).